The following is a 114-amino-acid chain: Histone H3-7 (114 aa).

Residues N1 to K17 are compositionally biased toward basic residues. Positions N1–H32 are disordered. Low complexity predominate over residues K18 to V28.

The protein belongs to the histone H3 family. The nucleosome is a histone octamer containing two molecules each of H2A, H2B, H3 and H4 assembled in one H3-H4 heterotetramer and two H2A-H2B heterodimers. The octamer wraps approximately 147 bp of DNA.

The protein localises to the nucleus. The protein resides in the chromosome. Its function is as follows. Core component of nucleosome. Nucleosomes wrap and compact DNA into chromatin, limiting DNA accessibility to the cellular machineries which require DNA as a template. Histones thereby play a central role in transcription regulation, DNA repair, DNA replication and chromosomal stability. DNA accessibility is regulated via a complex set of post-translational modifications of histones, also called histone code, and nucleosome remodeling. The sequence is that of Histone H3-7 (H3-7) from Stylonychia lemnae (Ciliate).